The chain runs to 160 residues: Variant surface antigen C (160 aa).

The N-terminal stretch at 1–29 (MKKSIFSKKLLVSFGSLVALASIPLIAIS) is a signal peptide. The N-palmitoyl cysteine moiety is linked to residue Cys30. Residue Cys30 is the site of S-diacylglycerol cysteine attachment. The interval 32 to 160 (QTNTDKSQQP…SSESGSQKTT (129 aa)) is disordered. Low complexity-rich tracts occupy residues 38 to 54 (SQQP…QSGT) and 62 to 87 (SGTS…QTET). 6 consecutive repeat copies span residues 86–97 (ETAPKSPESGSQ), 98–109 (EATPKSPESGSQ), 110–121 (EATPKSPESGSQ), 122–133 (EAAPKSSESGSQ), 134–145 (EAAPKSSESGSQ), and 146–157 (EAAPKSSESGSQ). The tract at residues 86-157 (ETAPKSPESG…APKSSESGSQ (72 aa)) is 6 X 12 AA tandem repeats. Polar residues predominate over residues 93–160 (ESGSQEATPK…SSESGSQKTT (68 aa)).

The protein localises to the cell membrane. Its function is as follows. Responsible for the antigenic diversity for host adaptation. In Mesomycoplasma hyorhinis (Mycoplasma hyorhinis), this protein is Variant surface antigen C (vlpC).